The sequence spans 280 residues: Urease accessory protein UreD (280 aa).

Belongs to the UreD family. UreD, UreF and UreG form a complex that acts as a GTP-hydrolysis-dependent molecular chaperone, activating the urease apoprotein by helping to assemble the nickel containing metallocenter of UreC. The UreE protein probably delivers the nickel.

It localises to the cytoplasm. Its function is as follows. Required for maturation of urease via the functional incorporation of the urease nickel metallocenter. The protein is Urease accessory protein UreD of Pseudomonas aeruginosa (strain ATCC 15692 / DSM 22644 / CIP 104116 / JCM 14847 / LMG 12228 / 1C / PRS 101 / PAO1).